The sequence spans 610 residues: Elongation factor 4 (610 aa).

The tr-type G domain maps to 11 to 193 (ENIRNFSIIA…QIVEKVPAPS (183 aa)). GTP is bound by residues 23 to 28 (DHGKST) and 140 to 143 (NKID).

Belongs to the TRAFAC class translation factor GTPase superfamily. Classic translation factor GTPase family. LepA subfamily.

It localises to the cell membrane. The catalysed reaction is GTP + H2O = GDP + phosphate + H(+). Functionally, required for accurate and efficient protein synthesis under certain stress conditions. May act as a fidelity factor of the translation reaction, by catalyzing a one-codon backward translocation of tRNAs on improperly translocated ribosomes. Back-translocation proceeds from a post-translocation (POST) complex to a pre-translocation (PRE) complex, thus giving elongation factor G a second chance to translocate the tRNAs correctly. Binds to ribosomes in a GTP-dependent manner. This Streptococcus equi subsp. zooepidemicus (strain H70) protein is Elongation factor 4.